The sequence spans 701 residues: MNPVIKTFQFGQSTVTLETGRIARQATGAVLVTVDNDVTVLVTVVGAKQADPGKGFFPLSVHYQEKTYAAGKIPGGFFKREGRPSEKETLTSRLIDRPIRPLFPEGFMNEVQVVCTVVSTSKKTDPDIAAMIGTSAALAISGIPFEGPIGAARVAFHESTGYLLNPTYEQLAASSLDMVVAGTSDAVLMVESEAQELTEDQMLGAVLFAHDEFQAVIQAVKELAAEAGKPTWDWKPAVANTELFNAIRAEFGEAVSQGYTITVKADRYARLGELRDQAVAKFSGEEGQPSASEVKEIFGEIEYRTVRENIVNGKPRIDGRDNKTVRPLNIEVGVLPKTHGSALFTRGETQALVVATLGTARDAQLLDTLEGEKKDPFMLHYNFPPFSVGECGRMGGAGRREIGHGRLARRSVQAMLPAADVFPYTIRVVSEITESNGSSSMASVCGASLALMDAGVPMKAPVAGIAMGLVKEGDKFAVLTDILGDEDHLGDMDFKVAGTAKGVTALQMDIKINGITEEIMEIALGQALEARLNILGQMNQVIGQSRTELSANAPTMIAMKIDTDKIRDVIGKGGATIRAICEETKASIDIEDDGSIKIFGETKEAADAAKQRILGITAEAEIGKIYVGKVERIVDFGAFVNILPGKDGLVHISMLSDARVEKVTDILKEGQEVEVLVLDVDNRGRIKLSIKDVPAAKASGV.

The Mg(2+) site is built by aspartate 487 and aspartate 493. The 60-residue stretch at 554 to 613 (PTMIAMKIDTDKIRDVIGKGGATIRAICEETKASIDIEDDGSIKIFGETKEAADAAKQRI) folds into the KH domain. Residues 623-691 (GKIYVGKVER…NRGRIKLSIK (69 aa)) form the S1 motif domain.

Belongs to the polyribonucleotide nucleotidyltransferase family. In terms of assembly, component of the RNA degradosome, which is a multiprotein complex involved in RNA processing and mRNA degradation. Requires Mg(2+) as cofactor.

Its subcellular location is the cytoplasm. The enzyme catalyses RNA(n+1) + phosphate = RNA(n) + a ribonucleoside 5'-diphosphate. In terms of biological role, involved in mRNA degradation. Catalyzes the phosphorolysis of single-stranded polyribonucleotides processively in the 3'- to 5'-direction. The chain is Polyribonucleotide nucleotidyltransferase from Pseudomonas putida (strain ATCC 47054 / DSM 6125 / CFBP 8728 / NCIMB 11950 / KT2440).